The following is a 246-amino-acid chain: tRNA (guanine-N(7)-)-methyltransferase (246 aa).

The S-adenosyl-L-methionine site is built by Glu-76, Glu-101, Asp-128, and Asp-151. The active site involves Asp-151. Lys-155 lines the substrate pocket. The tract at residues 157–162 (RHNKRR) is interaction with RNA. Substrate contacts are provided by residues Asp-187 and 222 to 225 (TKFE).

The protein belongs to the class I-like SAM-binding methyltransferase superfamily. TrmB family.

The catalysed reaction is guanosine(46) in tRNA + S-adenosyl-L-methionine = N(7)-methylguanosine(46) in tRNA + S-adenosyl-L-homocysteine. It participates in tRNA modification; N(7)-methylguanine-tRNA biosynthesis. Functionally, catalyzes the formation of N(7)-methylguanine at position 46 (m7G46) in tRNA. The chain is tRNA (guanine-N(7)-)-methyltransferase from Dechloromonas aromatica (strain RCB).